A 1338-amino-acid polypeptide reads, in one-letter code: Centrosomal P4.1-associated protein (1338 aa).

The interval 190–211 (GLSLLPDDQSQKHRSPGNTTTG) is disordered. Phosphoserine occurs at positions 260 and 316. Residues 319-394 (VANIEERPIK…FTNAKSKFQK (76 aa)) form an alpha/beta-tubulin binding region. 3 disordered regions span residues 386–414 (TNAK…PLFK), 436–479 (PILK…QTGK), and 521–551 (QGKD…ESES). Over residues 400–409 (LVTNQSTSED) the composition is skewed to polar residues. Ser-540 is modified (phosphoserine). A compositionally biased stretch (basic and acidic residues) spans 541–550 (PIRETMKESE). Ser-589 carries the phosphoserine; by PLK2 modification. The residue at position 595 (Ser-595) is a Phosphoserine; by PLK2 and PLK4. Disordered stretches follow at residues 611–789 (HRMS…LSLS), 845–865 (VKRG…TSEL), and 1096–1153 (YLPM…QGEI). Over residues 635 to 650 (NRSEDLDHTAREKESE) the composition is skewed to basic and acidic residues. A compositionally biased stretch (polar residues) spans 679–689 (QKSTSENQTEW). Residues 717–764 (STEDRERGISSREDSPQVCDDKGPFKDTRTQEDKRRDVDLDLSDKDYS) are compositionally biased toward basic and acidic residues. Ser-759 bears the Phosphoserine mark. The tract at residues 895–1338 (QPPGDNARSQ…EGNVLMDTEL (444 aa)) is interaction with STIL. The span at 1140 to 1149 (YKEEEEDQDI) shows a compositional bias: acidic residues.

Belongs to the TCP10 family. Forms homodimers. Associates with microtubules plus ends; binds to beta-tubulin subunits exposed on microtubule outer surface at its distal tip; also associates with microtubule lattice. Associated with the gamma-tubulin complex. Interacts with the head domain of EPB41. Interacts with LYST. Interacts with CEP152 (via C-terminus). Interacts with STIL. Forms a complex with STIL and SASS6. In terms of processing, phosphorylation at Ser-589 and Ser-595 by PLK2 is required for procentriole formation and centriole elongation. Phosphorylation by PLK2 oscillates during the cell cycle: it increases at G1/S transition and decreases during the exit from mitosis. Phosphorylation at Ser-595 is also mediated by PLK4 but is not a critical step in PLK4 function in procentriole assembly.

It is found in the cytoplasm. The protein localises to the cytoskeleton. It localises to the microtubule organizing center. The protein resides in the centrosome. Its subcellular location is the centriole. Its function is as follows. Plays an important role in cell division and centrosome function by participating in centriole duplication. Inhibits microtubule nucleation from the centrosome. Involved in the regulation of slow processive growth of centriolar microtubules. Acts as a microtubule plus-end tracking protein that stabilizes centriolar microtubules and inhibits microtubule polymerization and extension from the distal ends of centrioles. Required for centriole elongation and for STIL-mediated centriole amplification. Required for the recruitment of CEP295 to the proximal end of new-born centrioles at the centriolar microtubule wall during early S phase in a PLK4-dependent manner. May be involved in the control of centriolar-microtubule growth by acting as a regulator of tubulin release. This is Centrosomal P4.1-associated protein from Homo sapiens (Human).